The primary structure comprises 444 residues: Tryptophan 5-hydroxylase 1 (444 aa).

Residues 19 to 94 enclose the ACT domain; the sequence is TLIFSLKNEV…NVLSVTPPDN (76 aa). A Phosphoserine; by PKA modification is found at Ser-58. Positions 235, 257, and 265 each coordinate L-tryptophan. Residues His-272, His-277, and Glu-317 each contribute to the Fe cation site. Residues Ser-336 and Ile-366 each coordinate L-tryptophan.

The protein belongs to the biopterin-dependent aromatic amino acid hydroxylase family. As to quaternary structure, homotetramer. Interacts with DNAJC12. Fe(2+) is required as a cofactor. Post-translationally, ubiquitinated, leading to its degradation by the proteasome. Ubiquitinated is triggered by phosphorylation. In terms of processing, phosphorylated; triggering degradation by the proteasome.

It carries out the reaction (6R)-L-erythro-5,6,7,8-tetrahydrobiopterin + L-tryptophan + O2 = 5-hydroxy-L-tryptophan + (4aS,6R)-4a-hydroxy-L-erythro-5,6,7,8-tetrahydrobiopterin. It functions in the pathway aromatic compound metabolism; serotonin biosynthesis; serotonin from L-tryptophan: step 1/2. Oxidizes L-tryptophan to 5-hydroxy-l-tryptophan in the rate-determining step of serotonin biosynthesis. The chain is Tryptophan 5-hydroxylase 1 (TPH1) from Oryctolagus cuniculus (Rabbit).